Here is a 530-residue protein sequence, read N- to C-terminus: Laccase-2 (530 aa).

The N-terminal stretch at 1–23 (MLLSSAFVGSCLAILNFAAAVSA) is a signal peptide. 2 Plastocyanin-like domains span residues 36 to 154 (NKVI…YDPE) and 167 to 311 (TTII…RYTN). Residue asparagine 82 is glycosylated (N-linked (GlcNAc...) asparagine). 2 residues coordinate Cu cation: histidine 88 and histidine 90. 2 cysteine pairs are disulfide-bonded: cysteine 109–cysteine 520 and cysteine 141–cysteine 228. An N-linked (GlcNAc...) asparagine glycan is attached at asparagine 120. Cu cation is bound by residues histidine 133 and histidine 135. 8 N-linked (GlcNAc...) asparagine glycosylation sites follow: asparagine 191, asparagine 240, asparagine 292, asparagine 311, asparagine 366, asparagine 375, asparagine 392, and asparagine 412. Residues 379–504 (YVNPTVPVLL…FAVVLAEAPQ (126 aa)) form the Plastocyanin-like 3 domain. The Cu cation site is built by histidine 428, histidine 431, histidine 433, histidine 484, cysteine 485, histidine 486, and histidine 490.

Belongs to the multicopper oxidase family. Requires Cu cation as cofactor.

The protein resides in the secreted. It carries out the reaction 4 hydroquinone + O2 = 4 benzosemiquinone + 2 H2O. Its activity is regulated as follows. Inhibited by chloride ions. Inhibited by citrate. Inhibited by oxalate. Activated by acetate. In vitro, has activity towards 2,2'-azino-bis(3-ethylbenzthiazoline-6-sulfonic acid) (ABTS), 2,6-dimethoxy-phenol, and guaiacol. Although brown rot fungi preferentially degrade hemicellulose and cellulose, the enzyme may contribute to generating small amounts of lignin breakdown products required for catalytic reactions. The polypeptide is Laccase-2 (Fomitopsis schrenkii (Brown rot fungus)).